The primary structure comprises 274 residues: MNRTAIEQAAQFLKEKFPTSPQIGLILGSGLGVLADEIEQAIKIPYSDIPNFPVSTVEGHAGQLVYGQLEGATVVVMQGRFHYYEGYSFDKVTFPVRVMKALGVEQLIVTNAAGGVNESFEPGDLMIISDHINNMGGNPLIGPNDSALGVRFPDMSEAYSKRLRQLAKDVANDIGLRVREGVYVANTGPAYETPAEIRMIRVMGGDAVGMSTVPEVIVARHAGMEVLGISCISNMAAGILDQPLTHDEVIETTEKVKADFLRFVKAIVRNMAKN.

Phosphate is bound by residues S29, H60, 80–82 (RFH), and A112. A Phosphoserine modification is found at S29. Residue E192 coordinates a purine D-ribonucleoside. A phosphate-binding site is contributed by S211. N234 provides a ligand contact to a purine D-ribonucleoside.

It belongs to the PNP/MTAP phosphorylase family. Homotrimer.

The enzyme catalyses a purine D-ribonucleoside + phosphate = a purine nucleobase + alpha-D-ribose 1-phosphate. It carries out the reaction a purine 2'-deoxy-D-ribonucleoside + phosphate = a purine nucleobase + 2-deoxy-alpha-D-ribose 1-phosphate. The protein operates within purine metabolism; purine nucleoside salvage. Its function is as follows. The purine nucleoside phosphorylases catalyze the phosphorolytic breakdown of the N-glycosidic bond in the beta-(deoxy)ribonucleoside molecules, with the formation of the corresponding free purine bases and pentose-1-phosphate. Cleaves guanosine, inosine, 2'-deoxyguanosine and 2'-deoxyinosine. In Geobacillus stearothermophilus (Bacillus stearothermophilus), this protein is Purine nucleoside phosphorylase 1 (punA).